The sequence spans 601 residues: Glutamine--fructose-6-phosphate aminotransferase [isomerizing] (601 aa).

Residue Cys-2 is the Nucleophile; for GATase activity of the active site. Residues 2-218 form the Glutamine amidotransferase type-2 domain; sequence CGIVGYIGYD…DHEIVIVKRD (217 aa). 2 SIS domains span residues 284–423 and 453–591; these read IIND…NHGR and IATD…VDKP. Catalysis depends on Lys-596, which acts as the For Fru-6P isomerization activity.

As to quaternary structure, homodimer.

Its subcellular location is the cytoplasm. The enzyme catalyses D-fructose 6-phosphate + L-glutamine = D-glucosamine 6-phosphate + L-glutamate. Its function is as follows. Catalyzes the first step in hexosamine metabolism, converting fructose-6P into glucosamine-6P using glutamine as a nitrogen source. This Staphylococcus epidermidis (strain ATCC 35984 / DSM 28319 / BCRC 17069 / CCUG 31568 / BM 3577 / RP62A) protein is Glutamine--fructose-6-phosphate aminotransferase [isomerizing].